The following is a 542-amino-acid chain: Retron Ec83 probable ATPase (542 aa).

The ATP-binding signature appears at 92 to 99 (GNNGCGKS).

Its function is as follows. Probable ATPase component of antiviral defense system retron Ec83, composed of a non-coding RNA (ncRNA), a reverse transcriptase (RT), this protein and a putative HNH endonuclease. Expression of retron Ec83 confers protection against bacteriophage T2, T4 and T6. At multiplicity of infection (MOI) of 0.02 cultures slow growth when infected with T4 but do not collapse, at MOI 2 cultures enter growth stasis. This is Retron Ec83 probable ATPase from Escherichia coli.